A 150-amino-acid polypeptide reads, in one-letter code: Ribonuclease HI (150 aa).

One can recognise an RNase H type-1 domain in the interval 1–141 (MKSINAYTDG…VDVLARGQAM (141 aa)). Positions 9, 47, 69, and 133 each coordinate Mg(2+).

It belongs to the RNase H family. In terms of assembly, monomer. Mg(2+) is required as a cofactor.

It localises to the cytoplasm. It carries out the reaction Endonucleolytic cleavage to 5'-phosphomonoester.. Endonuclease that specifically degrades the RNA of RNA-DNA hybrids. In Xylella fastidiosa (strain 9a5c), this protein is Ribonuclease HI.